Consider the following 148-residue polypeptide: Large ribosomal subunit protein bL9 (148 aa).

The protein belongs to the bacterial ribosomal protein bL9 family.

In terms of biological role, binds to the 23S rRNA. The sequence is that of Large ribosomal subunit protein bL9 from Bacillus cytotoxicus (strain DSM 22905 / CIP 110041 / 391-98 / NVH 391-98).